The chain runs to 356 residues: Growth hormone-regulated TBC protein 1-A (356 aa).

A disordered region spans residues 1 to 29 (MEERDRTGRTGQPQHRINQPSTARERANS). Polar residues predominate over residues 9–22 (RTGQPQHRINQPST). A Rab-GAP TBC domain is found at 87–277 (GVPNEHRPLV…RIWDCLFYEG (191 aa)).

Functionally, may act as a GTPase-activating protein for Rab family protein(s). This chain is Growth hormone-regulated TBC protein 1-A (grtp1a), found in Danio rerio (Zebrafish).